Consider the following 465-residue polypeptide: Cysteine--tRNA ligase (465 aa).

A Zn(2+)-binding site is contributed by Cys30. The short motif at 32 to 42 (MTVYDYCHVGH) is the 'HIGH' region element. Cys214, His239, and Glu243 together coordinate Zn(2+). A 'KMSKS' region motif is present at residues 271 to 275 (KMSKS). Lys274 lines the ATP pocket.

This sequence belongs to the class-I aminoacyl-tRNA synthetase family. In terms of assembly, monomer. It depends on Zn(2+) as a cofactor.

It is found in the cytoplasm. The enzyme catalyses tRNA(Cys) + L-cysteine + ATP = L-cysteinyl-tRNA(Cys) + AMP + diphosphate. The polypeptide is Cysteine--tRNA ligase (Ralstonia nicotianae (strain ATCC BAA-1114 / GMI1000) (Ralstonia solanacearum)).